The following is a 118-amino-acid chain: Large ribosomal subunit protein uL18 (118 aa).

The protein belongs to the universal ribosomal protein uL18 family. Part of the 50S ribosomal subunit; part of the 5S rRNA/L5/L18/L25 subcomplex. Contacts the 5S and 23S rRNAs.

This is one of the proteins that bind and probably mediate the attachment of the 5S RNA into the large ribosomal subunit, where it forms part of the central protuberance. The chain is Large ribosomal subunit protein uL18 from Nitratiruptor sp. (strain SB155-2).